We begin with the raw amino-acid sequence, 454 residues long: Bifunctional protein GlmU (454 aa).

The tract at residues 1 to 240 is pyrophosphorylase; the sequence is MNVSVVILAA…EEEFMGVNSK (240 aa). UDP-N-acetyl-alpha-D-glucosamine contacts are provided by residues 8–11, Lys22, and 87–88; these read LAAG and GT. Residue Asp119 participates in Mg(2+) binding. Residues Gly152, Glu166, Asn181, and Asn238 each coordinate UDP-N-acetyl-alpha-D-glucosamine. Asn238 provides a ligand contact to Mg(2+). The segment at 241 to 261 is linker; sequence IQLACAQEIMLQRLREKAMEQ. An N-acetyltransferase region spans residues 262–454; that stretch reads GVIMNLPHTI…SDKNEEKKEQ (193 aa). UDP-N-acetyl-alpha-D-glucosamine-binding residues include Arg325 and Lys342. His353 acts as the Proton acceptor in catalysis. UDP-N-acetyl-alpha-D-glucosamine contacts are provided by Tyr356 and Asn367. Residues Ala370, 376 to 377, Ser395, Ala413, and Arg430 each bind acetyl-CoA; that span reads NY.

This sequence in the N-terminal section; belongs to the N-acetylglucosamine-1-phosphate uridyltransferase family. In the C-terminal section; belongs to the transferase hexapeptide repeat family. Homotrimer. The cofactor is Mg(2+).

Its subcellular location is the cytoplasm. The catalysed reaction is alpha-D-glucosamine 1-phosphate + acetyl-CoA = N-acetyl-alpha-D-glucosamine 1-phosphate + CoA + H(+). The enzyme catalyses N-acetyl-alpha-D-glucosamine 1-phosphate + UTP + H(+) = UDP-N-acetyl-alpha-D-glucosamine + diphosphate. The protein operates within nucleotide-sugar biosynthesis; UDP-N-acetyl-alpha-D-glucosamine biosynthesis; N-acetyl-alpha-D-glucosamine 1-phosphate from alpha-D-glucosamine 6-phosphate (route II): step 2/2. It functions in the pathway nucleotide-sugar biosynthesis; UDP-N-acetyl-alpha-D-glucosamine biosynthesis; UDP-N-acetyl-alpha-D-glucosamine from N-acetyl-alpha-D-glucosamine 1-phosphate: step 1/1. It participates in bacterial outer membrane biogenesis; LPS lipid A biosynthesis. Catalyzes the last two sequential reactions in the de novo biosynthetic pathway for UDP-N-acetylglucosamine (UDP-GlcNAc). The C-terminal domain catalyzes the transfer of acetyl group from acetyl coenzyme A to glucosamine-1-phosphate (GlcN-1-P) to produce N-acetylglucosamine-1-phosphate (GlcNAc-1-P), which is converted into UDP-GlcNAc by the transfer of uridine 5-monophosphate (from uridine 5-triphosphate), a reaction catalyzed by the N-terminal domain. This is Bifunctional protein GlmU from Helicobacter hepaticus (strain ATCC 51449 / 3B1).